Consider the following 126-residue polypeptide: Holo-[acyl-carrier-protein] synthase (126 aa).

Positions 9 and 58 each coordinate Mg(2+).

Belongs to the P-Pant transferase superfamily. AcpS family. Mg(2+) is required as a cofactor.

The protein localises to the cytoplasm. The enzyme catalyses apo-[ACP] + CoA = holo-[ACP] + adenosine 3',5'-bisphosphate + H(+). Its function is as follows. Transfers the 4'-phosphopantetheine moiety from coenzyme A to a Ser of acyl-carrier-protein. In Vibrio vulnificus (strain YJ016), this protein is Holo-[acyl-carrier-protein] synthase.